Consider the following 291-residue polypeptide: Fructose-1,6-bisphosphatase class 1 1 (291 aa).

Mg(2+) is bound by residues E78, D95, L97, and D98. Substrate contacts are provided by residues 98–101 (DGSS), Y203, and K233. Position 239 (E239) interacts with Mg(2+).

The protein belongs to the FBPase class 1 family. Homotetramer. The cofactor is Mg(2+).

The protein localises to the cytoplasm. The enzyme catalyses beta-D-fructose 1,6-bisphosphate + H2O = beta-D-fructose 6-phosphate + phosphate. The protein operates within carbohydrate biosynthesis; gluconeogenesis. The sequence is that of Fructose-1,6-bisphosphatase class 1 1 from Haloarcula marismortui (strain ATCC 43049 / DSM 3752 / JCM 8966 / VKM B-1809) (Halobacterium marismortui).